Reading from the N-terminus, the 1352-residue chain is Patatin-like phospholipase domain-containing protein 7 (1352 aa).

Residues 1–36 are Lumenal-facing; that stretch reads MQNEEDACLEAGYCLGTTLSSWRLHFMEEQSQSTML. Residues 37-57 traverse the membrane as a helical segment; that stretch reads MGIGIGALLTLAFVGITFFFV. Topologically, residues 58–1352 are cytoplasmic; sequence YRRVRRLRRA…DQGPRLEHPS (1295 aa). 170 to 297 is a binding site for a nucleoside 3',5'-cyclic phosphate; it reads VLGHFEKPLF…VRVVQIIMVR (128 aa). Residues 340–364 form a disordered region; that stretch reads MSYGPEEQLERSLRPSEFSSSDHGS. Serine 341 and serine 379 each carry phosphoserine. The segment at 384 to 411 is disordered; it reads SNHGEVDELRQSQGSGSNTSAFQESHEG. Residues 394 to 406 are compositionally biased toward polar residues; that stretch reads QSQGSGSNTSAFQ. Residues 499-585 and 613-718 each bind a nucleoside 3',5'-cyclic phosphate; these read FLHV…YEIM and ALDW…LGEK. Positions 681–967 are involved in the binding to lipid droplets; it reads VHAVRDSELA…RGCAQVGILR (287 aa). Residues 950-1116 enclose the PNPLA domain; sequence LVLGGGGARG…INNLPADVAR (167 aa). The GXGXXG motif lies at 954 to 959; the sequence is GGGARG. A GXSXG motif is present at residues 981–985; it reads GTSIG. Serine 983 (nucleophile) is an active-site residue. The Proton acceptor role is filled by aspartate 1103. Positions 1103 to 1105 match the DGA/G motif; sequence DGG. At serine 1280 the chain carries Phosphoserine. Residue threonine 1284 is modified to Phosphothreonine. The tract at residues 1295–1352 is disordered; it reads KETYADFQSTGIELDSDSEYEPSMLQGPPSLTSPEQSQDSFPWLPNQDDQGPRLEHPS. Positions 1323 to 1334 are enriched in polar residues; that stretch reads PSLTSPEQSQDS.

The protein belongs to the NTE family. As to expression, expressed in white and brown adipose tissue, cardiac muscle, skeletal muscle, and testis. Expressed in white adipose tissue, cardiac muscle, skeletal muscle, and testis.

Its subcellular location is the endoplasmic reticulum membrane. It localises to the lipid droplet. The catalysed reaction is a 1-acyl-sn-glycero-3-phosphocholine + H2O = sn-glycerol 3-phosphocholine + a fatty acid + H(+). The enzyme catalyses 1-(9Z-octadecenoyl)-sn-glycero-3-phosphocholine + H2O = sn-glycerol 3-phosphocholine + (9Z)-octadecenoate + H(+). It catalyses the reaction 1-(9Z-octadecenoyl)-sn-glycero-3-phosphoethanolamine + H2O = sn-glycero-3-phosphoethanolamine + (9Z)-octadecenoate + H(+). It carries out the reaction 1-(9Z-octadecenoyl)-sn-glycero-3-phospho-L-serine + H2O = sn-glycero-3-phospho-L-serine + (9Z)-octadecenoate + H(+). The catalysed reaction is 1-hexadecanoyl-sn-glycero-3-phosphocholine + H2O = sn-glycerol 3-phosphocholine + hexadecanoate + H(+). The enzyme catalyses 1-hexadecanoyl-sn-glycero-3-phosphate + H2O = sn-glycerol 3-phosphate + hexadecanoate + H(+). CAMP does not regulate lysophospholipase activity in vitro. Slightly inhibited by organophosphorus (OP) compounds such as mipafox, which is likely why mice are less sensitive to distal axonophathy induced by OPs compared to humans. Lysophospholipase which preferentially deacylates unsaturated lysophosphatidylcholine (C18:1), generating glycerophosphocholine. Can also deacylate, to a lesser extent, lysophosphatidylethanolamine (C18:1), lysophosphatidyl-L-serine (C18:1) and lysophosphatidic acid (C16:0). In terms of biological role, lysophospholipase. Functionally, lacks lysophospholipase activity. This Mus musculus (Mouse) protein is Patatin-like phospholipase domain-containing protein 7 (Pnpla7).